A 102-amino-acid polypeptide reads, in one-letter code: uncharacterized protein (102 aa).

The interval 1–102 (MPVEQDGLTG…LANIREQNHQ (102 aa)) is disordered.

This is an uncharacterized protein from Caenorhabditis elegans.